The chain runs to 380 residues: NADPH oxidoreductase (380 aa).

Residues 58 to 164 form the FAD-binding FR-type domain; the sequence is ARELRGRILG…AAPQGNFVLP (107 aa). One can recognise a 2Fe-2S ferredoxin-type domain in the interval 299-380; it reads GTVTFARSGK…AASGDCVLDI (82 aa). [2Fe-2S] cluster-binding residues include Cys333, Cys338, Cys341, and Cys368.

Interacts with DesA3 to form a functional acyl-CoA desaturase complex. Requires [2Fe-2S] cluster as cofactor. FAD is required as a cofactor.

Its subcellular location is the cell membrane. Its pathway is lipid metabolism; fatty acid metabolism. In terms of biological role, is likely involved in the aerobic desaturation system responsible for the synthesis of oleic acid from stearoyl-CoA; oleic acid is a precursor of mycobacterial membrane phospholipids and triglycerides. Is the electron transfer partner for the stearoyl-CoA 9-desaturase DesA3. Catalyzes electron transfer reaction between NADPH and the diiron center of DesA3. Cannot use NADH. In Mycobacterium tuberculosis (strain ATCC 25618 / H37Rv), this protein is NADPH oxidoreductase.